Reading from the N-terminus, the 440-residue chain is Alpha-methylserine aldolase (440 aa).

At Lys-255 the chain carries N6-(pyridoxal phosphate)lysine.

The protein belongs to the SHMT family. Alpha-methylserine aldolase subfamily. In terms of assembly, homodimer. Pyridoxal 5'-phosphate serves as cofactor.

It carries out the reaction 2-methyl-L-serine = formaldehyde + L-alanine. The catalysed reaction is 2-ethyl-L-serine = (2S)-2-aminobutanoate + formaldehyde. Its activity is regulated as follows. In the alpha-methyl-L-serine synthesis reaction, activity is inhibited by an excess amount of formaldehyde (at a concentration greater than 4 mM). Formaldehyde release activity is reduced by the sulfhydryl reagent N-ethylmaleimide, iodoacetate amide and iodoacetic acid, but not by dithiothreitol and 2-mercaptoethanol. Activity is enhanced by 1 mM of manganese chloride. Its function is as follows. Catalyzes the reversible interconversion of alpha-methyl-L-serine to L-alanine and formaldehyde. Can also catalyze the synthesis of alpha-ethyl-L-serine from L-2-aminobutyric acid and formaldehyde. Also shows low alanine racemase activity. Cannot use alpha-methyl-D-serine, L-serine, D-serine, (S)-2-amino-1-propanol, (R)-2-amino-1-propanol, (S)-alpha-hydroxymethyltyrosine, (R)-alpha-hydroxymethyltyrosine, alpha-iso-butyl-DL-serine, alpha-iso-propyl-DL-serine or alpha-benzyl-DL-serine. Cannot use D-alanine instead of L-alanine as the substrate for alpha-methyl-L-serine synthesis. Does not require tetrahydrofolate (THF) for activity. The protein is Alpha-methylserine aldolase of Variovorax paradoxus.